The sequence spans 267 residues: 3-methyl-2-oxobutanoate hydroxymethyltransferase (267 aa).

Residues D45 and D84 each coordinate Mg(2+). 3-methyl-2-oxobutanoate is bound by residues D45–S46, D84, and K113. Residue E115 coordinates Mg(2+). E182 (proton acceptor) is an active-site residue.

It belongs to the PanB family. Homodecamer; pentamer of dimers. Mg(2+) serves as cofactor.

Its subcellular location is the cytoplasm. It catalyses the reaction 3-methyl-2-oxobutanoate + (6R)-5,10-methylene-5,6,7,8-tetrahydrofolate + H2O = 2-dehydropantoate + (6S)-5,6,7,8-tetrahydrofolate. The protein operates within cofactor biosynthesis; coenzyme A biosynthesis. Catalyzes the reversible reaction in which hydroxymethyl group from 5,10-methylenetetrahydrofolate is transferred onto alpha-ketoisovalerate to form ketopantoate. The sequence is that of 3-methyl-2-oxobutanoate hydroxymethyltransferase from Sulfurisphaera tokodaii (strain DSM 16993 / JCM 10545 / NBRC 100140 / 7) (Sulfolobus tokodaii).